The sequence spans 309 residues: MPIKIPDTLPAFDALVHEGVRVMTETAAIRQDIRPLQIALLNLMPNKIKTEVQFARLIGASPLQVELTLVRIGGHKAKNTPEEHLLSFYQTWEEVKHRKFDGLIITGAPVETLPFEDVTYWSEMQQIFDWTQTNVHTTMNVCWGAMAAIYHFHKVPKHGLKEKAFGVFRHRNLAPSSIYLNGFSDDFQVPVSRWTEVRRADIEKVPDLNILMESDEMGVCLVQEDKGNRLYMFNHVEYDSTSLADEYFRDVSAGIPIRLPYDYFPHNDDTLTPLNRWRSHAHLLFGNWINEMYQTTSYDLNDIGKGRGI.

Cysteine 142 functions as the Acyl-thioester intermediate in the catalytic mechanism. Substrate-binding residues include lysine 163 and serine 192. The active-site Proton acceptor is the histidine 235. Glutamate 237 is an active-site residue. Residue arginine 249 participates in substrate binding.

This sequence belongs to the MetA family.

The protein resides in the cytoplasm. The catalysed reaction is L-homoserine + acetyl-CoA = O-acetyl-L-homoserine + CoA. The protein operates within amino-acid biosynthesis; L-methionine biosynthesis via de novo pathway; O-acetyl-L-homoserine from L-homoserine: step 1/1. Transfers an acetyl group from acetyl-CoA to L-homoserine, forming acetyl-L-homoserine. This chain is Homoserine O-acetyltransferase, found in Allorhizobium ampelinum (strain ATCC BAA-846 / DSM 112012 / S4) (Agrobacterium vitis (strain S4)).